A 299-amino-acid polypeptide reads, in one-letter code: Ophiobolin family sesterterpenoid biosynthesis cluster acetyltransferase (299 aa).

The N-terminal stretch at Met-1–Gly-20 is a signal peptide. 7 N-linked (GlcNAc...) asparagine glycosylation sites follow: Asn-28, Asn-58, Asn-77, Asn-126, Asn-177, Asn-212, and Asn-282.

It belongs to the bfoA family.

It participates in secondary metabolite biosynthesis; terpenoid biosynthesis. Its function is as follows. Acetyltransferase; part of the gene cluster that mediates the biosynthesis of an ophiobolin family sesterterpenoid. In terms of biological role, sesterterpenoid synthase; part of the gene cluster that mediates the biosynthesis of an ophiobolin family sesterterpenoid. This chain is Ophiobolin family sesterterpenoid biosynthesis cluster acetyltransferase, found in Aspergillus terreus.